Reading from the N-terminus, the 365-residue chain is Outer membrane lipoprotein A (365 aa).

The signal sequence occupies residues 1 to 19 (MNIATKLMASLVASVVLTA). The disordered stretch occupies residues 19 to 121 (ACSGGGSSGS…KGEELSKDKS (103 aa)). Cys20 carries the N-palmitoyl cysteine lipid modification. Residue Cys20 is the site of S-diacylglycerol cysteine attachment. Basic and acidic residues-rich tracts occupy residues 48-68 (EQPK…EPKE) and 105-121 (NPQK…KDKS).

It localises to the cell outer membrane. The chain is Outer membrane lipoprotein A (omlA) from Actinobacillus pleuropneumoniae (Haemophilus pleuropneumoniae).